The chain runs to 306 residues: Non-specific ribonucleoside hydrolase RihC (306 aa).

His-235 is an active-site residue.

It belongs to the IUNH family. RihC subfamily.

Functionally, hydrolyzes both purine and pyrimidine ribonucleosides with a broad-substrate specificity. This chain is Non-specific ribonucleoside hydrolase RihC, found in Salmonella paratyphi C (strain RKS4594).